The sequence spans 394 residues: Bifunctional enzyme Fae/Hps (394 aa).

The segment at 1-162 (MEFRIGEALI…YEKDRSFHPF (162 aa)) is formaldehyde-activating enzyme. Histidine 18 functions as the Proton donor in the catalytic mechanism. Positions 20, 49, 67, 69, and 84 each coordinate substrate. The tract at residues 163 to 394 (VGRKLTKLWD…TDQFRIMTDF (232 aa)) is 3-hexulose-6-phosphate synthase.

In the N-terminal section; belongs to the formaldehyde-activating enzyme family. This sequence in the C-terminal section; belongs to the HPS/KGPDC family. HPS subfamily.

It carries out the reaction 5,6,7,8-tetrahydromethanopterin + formaldehyde = 5,10-methylenetetrahydromethanopterin + H2O. The enzyme catalyses D-ribulose 5-phosphate + formaldehyde = D-arabino-hex-3-ulose 6-phosphate. It participates in carbohydrate biosynthesis; D-ribose 5-phosphate biosynthesis. Functionally, catalyzes the condensation of formaldehyde with tetrahydromethanopterin (H(4)MPT) to 5,10-methylenetetrahydromethanopterin. In terms of biological role, catalyzes the reversible formation of ribulose-5-phosphate and formaldehyde from 3-hexulose-6-phosphate. This is Bifunctional enzyme Fae/Hps from Archaeoglobus fulgidus (strain ATCC 49558 / DSM 4304 / JCM 9628 / NBRC 100126 / VC-16).